Reading from the N-terminus, the 139-residue chain is Large ribosomal subunit protein uL22 (139 aa).

Residues 118 to 139 (VEVESRPKKVASKSKSQKGSAR) are disordered. A compositionally biased stretch (basic residues) spans 125–139 (KKVASKSKSQKGSAR).

This sequence belongs to the universal ribosomal protein uL22 family. In terms of assembly, part of the 50S ribosomal subunit.

Its function is as follows. This protein binds specifically to 23S rRNA; its binding is stimulated by other ribosomal proteins, e.g. L4, L17, and L20. It is important during the early stages of 50S assembly. It makes multiple contacts with different domains of the 23S rRNA in the assembled 50S subunit and ribosome. The globular domain of the protein is located near the polypeptide exit tunnel on the outside of the subunit, while an extended beta-hairpin is found that lines the wall of the exit tunnel in the center of the 70S ribosome. This chain is Large ribosomal subunit protein uL22, found in Saccharopolyspora erythraea (strain ATCC 11635 / DSM 40517 / JCM 4748 / NBRC 13426 / NCIMB 8594 / NRRL 2338).